The chain runs to 2321 residues: Neurogenic locus notch homolog protein 3 (2321 aa).

Basic residues predominate over residues 1–14; sequence MGPGARGRRRRRRP. Positions 1–26 are disordered; sequence MGPGARGRRRRRRPMSPPPPPPPVRA. The signal sequence occupies residues 1–39; sequence MGPGARGRRRRRRPMSPPPPPPPVRALPLLLLLAGPGAA. Pro residues predominate over residues 15–25; the sequence is MSPPPPPPPVR. 3 EGF-like domains span residues 40–77, 78–118, and 119–156; these read APPC…ERCQ, LEDP…PDCS, and LPDP…RSCR. At 40–1643 the chain is on the extracellular side; it reads APPCLDGSPC…LEPPEPSVPL (1604 aa). 99 cysteine pairs are disulfide-bonded: cysteine 43-cysteine 55, cysteine 49-cysteine 65, cysteine 67-cysteine 76, cysteine 82-cysteine 93, cysteine 87-cysteine 106, cysteine 108-cysteine 117, cysteine 123-cysteine 134, cysteine 128-cysteine 144, cysteine 146-cysteine 155, cysteine 162-cysteine 174, cysteine 168-cysteine 183, cysteine 185-cysteine 194, cysteine 201-cysteine 212, cysteine 206-cysteine 222, cysteine 224-cysteine 233, cysteine 240-cysteine 251, cysteine 245-cysteine 260, cysteine 262-cysteine 271, cysteine 278-cysteine 291, cysteine 285-cysteine 300, cysteine 302-cysteine 311, cysteine 318-cysteine 329, cysteine 323-cysteine 338, cysteine 340-cysteine 349, cysteine 355-cysteine 366, cysteine 360-cysteine 377, cysteine 379-cysteine 388, cysteine 395-cysteine 408, cysteine 402-cysteine 417, cysteine 419-cysteine 428, cysteine 435-cysteine 446, cysteine 440-cysteine 455, cysteine 457-cysteine 466, cysteine 473-cysteine 484, cysteine 478-cysteine 493, cysteine 495-cysteine 504, cysteine 511-cysteine 522, cysteine 516-cysteine 531, cysteine 533-cysteine 542, cysteine 549-cysteine 559, cysteine 554-cysteine 568, cysteine 570-cysteine 579, cysteine 586-cysteine 597, cysteine 591-cysteine 606, cysteine 608-cysteine 617, cysteine 624-cysteine 634, cysteine 629-cysteine 643, cysteine 645-cysteine 654, cysteine 661-cysteine 672, cysteine 666-cysteine 681, cysteine 683-cysteine 692, cysteine 699-cysteine 709, cysteine 704-cysteine 718, cysteine 720-cysteine 729, cysteine 738-cysteine 749, cysteine 743-cysteine 758, cysteine 760-cysteine 769, cysteine 775-cysteine 786, cysteine 780-cysteine 796, cysteine 798-cysteine 807, cysteine 814-cysteine 826, cysteine 820-cysteine 835, cysteine 837-cysteine 846, cysteine 853-cysteine 864, cysteine 858-cysteine 873, cysteine 875-cysteine 884, cysteine 891-cysteine 901, cysteine 896-cysteine 910, cysteine 912-cysteine 921, cysteine 928-cysteine 939, cysteine 933-cysteine 948, cysteine 950-cysteine 959, cysteine 966-cysteine 977, cysteine 971-cysteine 986, cysteine 988-cysteine 997, cysteine 1004-cysteine 1015, cysteine 1009-cysteine 1022, cysteine 1024-cysteine 1033, cysteine 1040-cysteine 1061, cysteine 1055-cysteine 1070, cysteine 1072-cysteine 1081, cysteine 1088-cysteine 1099, cysteine 1093-cysteine 1108, cysteine 1110-cysteine 1119, cysteine 1126-cysteine 1137, cysteine 1131-cysteine 1146, cysteine 1148-cysteine 1157, cysteine 1164-cysteine 1182, cysteine 1176-cysteine 1191, cysteine 1193-cysteine 1202, cysteine 1209-cysteine 1222, cysteine 1214-cysteine 1232, cysteine 1234-cysteine 1243, cysteine 1250-cysteine 1261, cysteine 1255-cysteine 1275, cysteine 1277-cysteine 1286, cysteine 1293-cysteine 1304, cysteine 1298-cysteine 1313, and cysteine 1315-cysteine 1324. Positions 158–195 constitute an EGF-like 4; calcium-binding domain; that stretch reads DVDECRVGEPCRHGGTCLNTPGSFRCQCPAGYTGPLCE. Residues 197 to 234 form the EGF-like 5 domain; the sequence is PAVPCAPSPCRNGGTCRQSGDLTYDCACLPGFEGQNCE. The 37-residue stretch at 236 to 272 folds into the EGF-like 6; calcium-binding domain; the sequence is NVDDCPGHRCLNGGTCVDGVNTYNCQCPPEWTGQFCT. The 39-residue stretch at 274-312 folds into the EGF-like 7 domain; that stretch reads DVDECQLQPNACHNGGTCFNTLGGHSCVCVNGWTGESCS. The region spanning 314–350 is the EGF-like 8; calcium-binding domain; it reads NIDDCATAVCFHGATCHDRVASFYCACPMGKTGLLCH. Residues 351 to 389 form the EGF-like 9 domain; that stretch reads LDDACVSNPCHEDAICDTNPVNGRAICTCPPGFTGGACD. An EGF-like 10; calcium-binding domain is found at 391–429; the sequence is DVDECSIGANPCEHLGRCVNTQGSFLCQCGRGYTGPRCE. The 37-residue stretch at 431-467 folds into the EGF-like 11; calcium-binding domain; that stretch reads DVNECLSGPCRNQATCLDRIGQFTCICMAGFTGTYCE. The 37-residue stretch at 469-505 folds into the EGF-like 12; calcium-binding domain; it reads DIDECQSSPCVNGGVCKDRVNGFSCTCPSGFSGSTCQ. The region spanning 507 to 543 is the EGF-like 13; calcium-binding domain; the sequence is DVDECASTPCRNGAKCVDQPDGYECRCAEGFEGTLCD. The EGF-like 14; calcium-binding domain occupies 545–580; that stretch reads NVDDCSPDPCHHGRCVDGIASFSCACAPGYTGTRCE. Residues 582 to 618 enclose the EGF-like 15; calcium-binding domain; the sequence is QVDECRSQPCRHGGKCLDLVDKYLCRCPSGTTGVNCE. The EGF-like 16; calcium-binding domain maps to 620-655; that stretch reads NIDDCASNPCTFGVCRDGINRYDCVCQPGFTGPLCN. Residues 657-693 form the EGF-like 17; calcium-binding domain; the sequence is EINECASSPCGEGGSCVDGENGFRCLCPPGSLPPLCL. EGF-like domains follow at residues 695-730, 734-770, and 771-808; these read PSHP…PRCS, ARDA…RQCE, and LLSP…PRCQ. Residues 810–847 enclose the EGF-like 21; calcium-binding domain; that stretch reads DVDECAGPAPCGPHGICTNLAGSFSCTCHGGYTGPSCD. An EGF-like 22; calcium-binding domain is found at 849–885; the sequence is DINDCDPNPCLNGGSCQDGVGSFSCSCLPGFAGPRCA. In terms of domain architecture, EGF-like 23; calcium-binding spans 887 to 922; that stretch reads DVDECLSNPCGPGTCTDHVASFTCTCPPGYGGFHCE. EGF-like domains are found at residues 924–960, 962–998, 1000–1034, 1036–1082, and 1084–1120; these read DLPD…AHCQ, EADP…PQCQ, LVDW…RLCD, RSLP…SHCE, and EVDP…DNCE. One can recognise an EGF-like 29; calcium-binding domain in the interval 1122–1158; sequence DVDECASQPCQHGGSCIDLVARYLCSCPPGTLGVLCE. Residues 1160–1203 form the EGF-like 30; calcium-binding domain; sequence NEDDCGPGPPLDSGPRCLHNGTCVDLVGGFRCTCPPGYTGLRCE. Asparagine 1179 carries N-linked (GlcNAc...) asparagine glycosylation. 4 EGF-like domains span residues 1205–1244, 1246–1287, 1289–1325, and 1335–1373; these read DINE…PRCQ, VLSP…PRCE, VARS…PSCR, and SNAS…PRCE. An N-linked (GlcNAc...) asparagine glycan is attached at asparagine 1336. Intrachain disulfides connect cysteine 1339–cysteine 1350, cysteine 1344–cysteine 1361, cysteine 1363–cysteine 1372, cysteine 1387–cysteine 1410, cysteine 1392–cysteine 1405, cysteine 1401–cysteine 1417, cysteine 1428–cysteine 1451, cysteine 1433–cysteine 1446, cysteine 1442–cysteine 1458, cysteine 1467–cysteine 1493, cysteine 1475–cysteine 1488, and cysteine 1484–cysteine 1500. LNR repeat units follow at residues 1387–1427, 1428–1458, and 1467–1505; these read CPRA…PWRQ, CEAL…NFDC, and CNPV…SEVP. Asparagine 1438 is a glycosylation site (N-linked (GlcNAc...) asparagine). A helical transmembrane segment spans residues 1644–1664; the sequence is LPLLVAGAVLLLVILVLGVMV. Over 1665 to 2321 the chain is Cytoplasmic; it reads ARRKREHSTL…EVTPKRQVLA (657 aa). ANK repeat units follow at residues 1838–1867, 1871–1901, 1905–1934, 1938–1967, and 1971–2000; these read TGET…DTNA, SGRT…DLDA, DGST…DVNA, LGKS…NKDM, and KEET…NREI. The segment at 2024-2120 is disordered; that stretch reads LDQPSGPRSP…FGGPPASPGG (97 aa). The segment covering 2039–2053 has biased composition (low complexity); sequence LGPLLCPPGAFLPGL. Arginine 2174 is subject to Omega-N-methylarginine. Residues 2190-2321 are disordered; it reads APGPQLLNPG…EVTPKRQVLA (132 aa). Positions 2269–2289 are enriched in low complexity; it reads STPSPATATGAMATTTGALPA. Polar residues predominate over residues 2296 to 2308; it reads VPSSLAQAQTQLG.

The protein belongs to the NOTCH family. In terms of assembly, heterodimer of a C-terminal fragment N(TM) and a N-terminal fragment N(EC) which are probably linked by disulfide bonds. Interacts with MAML1, MAML2 and MAML3 which act as transcriptional coactivators for NOTCH3. Interacts with PSMA1. Interacts with HIF1AN. Synthesized in the endoplasmic reticulum as an inactive form which is proteolytically cleaved by a furin-like convertase in the trans-Golgi network before it reaches the plasma membrane to yield an active, ligand-accessible form. Cleavage results in a C-terminal fragment N(TM) and a N-terminal fragment N(EC). Following ligand binding, it is cleaved by TNF-alpha converting enzyme (TACE) to yield a membrane-associated intermediate fragment called notch extracellular truncation (NEXT). This fragment is then cleaved by presenilin dependent gamma-secretase to release a notch-derived peptide containing the intracellular domain (NICD) from the membrane. Post-translationally, phosphorylated. In terms of processing, hydroxylated by HIF1AN. In terms of tissue distribution, ubiquitously expressed in fetal and adult tissues.

The protein localises to the cell membrane. It localises to the nucleus. Functionally, functions as a receptor for membrane-bound ligands Jagged1, Jagged2 and Delta1 to regulate cell-fate determination. Upon ligand activation through the released notch intracellular domain (NICD) it forms a transcriptional activator complex with RBPJ/RBPSUH and activates genes of the enhancer of split locus. Affects the implementation of differentiation, proliferation and apoptotic programs. This Homo sapiens (Human) protein is Neurogenic locus notch homolog protein 3 (NOTCH3).